We begin with the raw amino-acid sequence, 1577 residues long: MILLHFVYSLWALLLIPLINAEEFTPKVTKTIAQDSFEILSFDDSNTLIRKQDASVTISFDDGETWEKVEGIEDEITWIYIDPFNRHDRAVATSMYESRLYITNDQGKSWERITLPDSEKNISSRGCYIETHPLNKNYFLAKCNYCEKTEVDNEENSGDEEGAPVIFNITRCTDKVFASNDGGKSFSEIKSSLERNENSAISISDCGFAKTGKDSDLESSDTSIICLFQNMQLIMDEFSSPYTESKLVLTTDWGKSLKEFDQFKDKVVNGYRILKSHMVVITQGDRYNDMSSMDVWVSNDLSNFKMAYMPTQLRHSMQGEIYEDAMGRIILPMSRERSDQEEDKGIVSEILISDSQGLKFSPIPWTANEVFGYINLYQPTYLKGTMIASLYPLSRRRNRKGKAKGVKNKGVTKISVDNGLTWTVLKVVDPDNADSFDCDITDFENCSLQNMFYTREGSTPTAGILMTTGIVGDGSVFDWGDQRTFISRDGGLTWKLAFDFPCLYAVGDYGNVIVAIPYNADEDDDPQSEFYYSLDQGKTWTEYQLETTIYPNEVMNTTPDGSGAKFILNGFTLAHMDGTTNFIYAIDFSTAFNDKTCEENDFEDWNLAEGKCVNGVKYKIRRRKQDAQCLVKKVFEDLQLFETACDKCTEADYECAFEFVRDATGKCVPDYNLIVLSDVCDKTKKKTVPVKPLQLVKGDKCKKPMTVKSVDISCEGVPKKGTNDKEIVVTENKFDFKIQFYQYFDTVTDESLLMINSRGEAYISHDGGQTIRRFDSNGETIIEVVFNPYYNSSAYLFGSKGSIFSTHDRGYSFMTAKLPEARQLGMPLDFNAKAQDTFIYYGGKNCESILSPECHAVAYLTNDGGETFTEMLDNAIHCEFAGSLFKYPSNEDMVMCQVKEKSSQTRSLVSSTDFFQDDKNTVFENIIGYLSTGGYIIVAVPHENNELRAYVTIDGTEFAEAKFPYDEDVGKQEAFTILESEKGSIFLHLATNLVPGRDFGNLLKSNSNGTSFVTLEHAVNRNTFGYVDFEKIQGLEGIILTNIVSNSDKVAENKEDKQLKTKITFNEGSDWNFLKPPKRDSEGKKFSCSSKSLDECSLHLHGYTERKDIRDTYSSGSALGMMFGVGNVGPNLLPYKECSTFFTTDGGETWAEVKKTPHQWEYGDHGGILVLVPENSETDSISYSTDFGKTWKDYKFCADKVLVKDITTVPRDSALRFLLFGEAADIGGSSFRTYTIDFRNIFERQCDFDITGKESADYKYSPLSSKSNCLFGHQTEFLRKTDENCFIGNIPLSEFSRNIKNCSCTRQDFECDYNFYKANDGTCKLVKGLSPANAADVCKKEPDLIEYFESSGYRKIPLSTCEGGLKLDAPSSPHACPGKEKEFKEKYSVSAGPFAFIFISILLIIFFAAWFVYDRGIRRNGGFARFGEIRLGDDGLIENNNTDRVVNNIVKSGFYVFSNIGSLLQHTKTNIAHVISKIRGRFGNRTGPSYSSLIHDQFLDEADDLLAGHDEDANDLSSFMDQGSNFEIEEDDVPTLEEEHTSYTDQPTTTDVPDALPEGNEENIDRPDSTAPSNENQ.

A signal peptide spans 1-21 (MILLHFVYSLWALLLIPLINA). The Lumenal portion of the chain corresponds to 22 to 1391 (EEFTPKVTKT…EFKEKYSVSA (1370 aa)). 2 BNR repeats span residues 58–68 (ISFDDGETWEK) and 101–111 (YITNDQGKSWE). 2 N-linked (GlcNAc...) asparagine glycosylation sites follow: Asn-121 and Asn-168. BNR repeat units follow at residues 179-187 (SNDGGKSFS) and 414-423 (ISVDNGLTWT). Residue Asn-445 is glycosylated (N-linked (GlcNAc...) asparagine). BNR repeat units follow at residues 485 to 495 (FISRDGGLTWK), 531 to 541 (YYSLDQGKTWT), and 762 to 771 (YISHDGGQTI). Asn-791 is a glycosylation site (N-linked (GlcNAc...) asparagine). The stretch at 859-869 (YLTNDGGETFT) is one BNR 8 repeat. N-linked (GlcNAc...) asparagine glycosylation is present at Asn-1008. BNR repeat units follow at residues 1141-1150 (FFTTDGGETW) and 1183-1192 (YSTDFGKTWK). N-linked (GlcNAc...) asparagine glycosylation is present at Asn-1301. Residues 1392 to 1412 (GPFAFIFISILLIIFFAAWFV) form a helical membrane-spanning segment. The Cytoplasmic segment spans residues 1413 to 1577 (YDRGIRRNGG…DSTAPSNENQ (165 aa)). A disordered region spans residues 1531–1577 (DDVPTLEEEHTSYTDQPTTTDVPDALPEGNEENIDRPDSTAPSNENQ).

It belongs to the VPS10-related sortilin family.

It localises to the golgi apparatus. It is found in the trans-Golgi network membrane. The protein resides in the prevacuolar compartment membrane. Functions as a sorting receptor in the Golgi compartment required for the intracellular sorting and delivery of soluble vacuolar proteins, like carboxypeptidase Y (CPY) and proteinase A. Executes multiple rounds of sorting by cycling between the late Golgi and a prevacuolar endosome-like compartment. Binds the Golgi-modified P2 form of CPY, and this interaction is dependent on the presence of an intact CPY vacuolar protein sorting signal. The sequence is that of Vacuolar protein sorting/targeting protein PEP1 (PEP1) from Saccharomyces cerevisiae (strain RM11-1a) (Baker's yeast).